The primary structure comprises 261 residues: UPF0246 protein PMI0005 (261 aa).

This sequence belongs to the UPF0246 family.

In Proteus mirabilis (strain HI4320), this protein is UPF0246 protein PMI0005.